The primary structure comprises 506 residues: Anaerobic nitric oxide reductase transcription regulator NorR (506 aa).

D57 bears the 4-aspartylphosphate mark. In terms of domain architecture, Sigma-54 factor interaction spans 187–416 (MIGLSPAMTQ…LEHAIHRAVV (230 aa)). ATP contacts are provided by residues 215 to 222 (GETGTGKE) and 278 to 287 (ADNGTLFLDE). Residues 481–500 (WAASARALETDVANLHRLAK) constitute a DNA-binding region (H-T-H motif).

The protein operates within nitrogen metabolism; nitric oxide reduction. In terms of biological role, required for the expression of anaerobic nitric oxide (NO) reductase, acts as a transcriptional activator for at least the norVW operon. Activation also requires sigma-54. This Salmonella gallinarum (strain 287/91 / NCTC 13346) protein is Anaerobic nitric oxide reductase transcription regulator NorR.